Here is a 454-residue protein sequence, read N- to C-terminus: Inactive tetrahydroanabasine acetyltransferase pauper allele (454 aa).

This sequence belongs to the plant acyltransferase family. Monomer.

This Lupinus albus (White lupine) protein is Inactive tetrahydroanabasine acetyltransferase pauper allele.